Consider the following 285-residue polypeptide: Nurim (285 aa).

The Nuclear portion of the chain corresponds to Met1–Ser16. Residues Leu17 to Phe44 traverse the membrane as a helical segment. Over Leu45 to Gln74 the chain is Perinuclear space. Residues Phe75–Met96 traverse the membrane as a helical segment. Residues Ala97–Gln113 are Nuclear-facing. A helical membrane pass occupies residues Arg114–Arg130. Over Phe131–Trp149 the chain is Perinuclear space. The helical transmembrane segment at Ser150 to Leu180 threads the bilayer. Residues Met181–Leu207 lie on the Nuclear side of the membrane. The chain crosses the membrane as a helical span at residues Tyr208 to Val226. The Perinuclear space segment spans residues Pro227–Asp232. A helical membrane pass occupies residues Arg233–Leu250. Residues Asp251–Asn285 lie on the Nuclear side of the membrane.

This sequence belongs to the nurim family.

The protein localises to the nucleus inner membrane. The sequence is that of Nurim (nrm) from Xenopus laevis (African clawed frog).